Reading from the N-terminus, the 86-residue chain is MAHKKGTGSTRNGRDSNSKRLGVKAFGGEKVSAGSIIIRQRGTSFLPGINVGKGKDDTLFALKEGTVSFDSIKRNLRNRKRVNIIL.

Positions 1–23 are disordered; the sequence is MAHKKGTGSTRNGRDSNSKRLGV.

Belongs to the bacterial ribosomal protein bL27 family.

This is Large ribosomal subunit protein bL27 from Prochlorococcus marinus (strain MIT 9515).